The following is a 526-amino-acid chain: Light-independent protochlorophyllide reductase subunit B (526 aa).

Asp-36 provides a ligand contact to [4Fe-4S] cluster. The active-site Proton donor is Asp-284. Residue 419-420 participates in substrate binding; it reads GL.

It belongs to the ChlB/BchB/BchZ family. As to quaternary structure, protochlorophyllide reductase is composed of three subunits; BchL, BchN and BchB. Forms a heterotetramer of two BchB and two BchN subunits. Requires [4Fe-4S] cluster as cofactor.

It carries out the reaction chlorophyllide a + oxidized 2[4Fe-4S]-[ferredoxin] + 2 ADP + 2 phosphate = protochlorophyllide a + reduced 2[4Fe-4S]-[ferredoxin] + 2 ATP + 2 H2O. Its pathway is porphyrin-containing compound metabolism; bacteriochlorophyll biosynthesis (light-independent). Functionally, component of the dark-operative protochlorophyllide reductase (DPOR) that uses Mg-ATP and reduced ferredoxin to reduce ring D of protochlorophyllide (Pchlide) to form chlorophyllide a (Chlide). This reaction is light-independent. The NB-protein (BchN-BchB) is the catalytic component of the complex. The protein is Light-independent protochlorophyllide reductase subunit B of Halorhodospira halophila (strain DSM 244 / SL1) (Ectothiorhodospira halophila (strain DSM 244 / SL1)).